The primary structure comprises 711 residues: Polyribonucleotide nucleotidyltransferase (711 aa).

The Mg(2+) site is built by D486 and D492. Residues 553-612 (PRIHTIKINPDKIKDVIGKGGSVIRALTEETGTTIEIEDDGTVKIAATDGEKAKHAIRRI) enclose the KH domain. The S1 motif domain occupies 622 to 690 (GRIYNGKVTR…RQGRVRLSIK (69 aa)). The segment at 690–711 (KEATEQSQPAAAPEAPAAEQGE) is disordered. The segment covering 694–711 (EQSQPAAAPEAPAAEQGE) has biased composition (low complexity).

It belongs to the polyribonucleotide nucleotidyltransferase family. Component of the RNA degradosome, which is a multiprotein complex involved in RNA processing and mRNA degradation. Mg(2+) serves as cofactor.

Its subcellular location is the cytoplasm. The enzyme catalyses RNA(n+1) + phosphate = RNA(n) + a ribonucleoside 5'-diphosphate. Functionally, involved in mRNA degradation. Catalyzes the phosphorolysis of single-stranded polyribonucleotides processively in the 3'- to 5'-direction. The chain is Polyribonucleotide nucleotidyltransferase from Citrobacter koseri (strain ATCC BAA-895 / CDC 4225-83 / SGSC4696).